Consider the following 227-residue polypeptide: Nitrobenzene nitroreductase (227 aa).

FMN is bound at residue 14-18 (RRAKR). Positions 44 and 109 each coordinate NADP(+). Residues 172 to 173 (VF) and Lys215 contribute to the FMN site.

The protein belongs to the nitroreductase family. In terms of assembly, monomer. FMN is required as a cofactor.

The catalysed reaction is N-phenylhydroxylamine + 2 NADP(+) + H2O = nitrobenzene + 2 NADPH + 2 H(+). It participates in xenobiotic degradation; nitrobenzene degradation. Inhibited by dicumarol, p-hydroxymercuribenzoate and salicyl hydroxamate. Involved in the biodegradation of nitroaromatic compounds. Catalyzes the two-electron reduction of nitrobenzene (NB) to produce a nitrosobenzene (NOB) intermediate, which is immediately reduced to hydroxylaminobenzene (HAB) by a second two-electron transfer. Also active on menadione and nitrofurazone. Replacing NADPH with NADH results in a 4-fold decrease in the reaction rate. This Ectopseudomonas oleovorans (Pseudomonas oleovorans) protein is Nitrobenzene nitroreductase.